The primary structure comprises 429 residues: 4-hydroxy-3-methylbut-2-en-1-yl diphosphate synthase (flavodoxin) (429 aa).

Positions 310, 313, 356, and 363 each coordinate [4Fe-4S] cluster.

Belongs to the IspG family. The cofactor is [4Fe-4S] cluster.

It catalyses the reaction (2E)-4-hydroxy-3-methylbut-2-enyl diphosphate + oxidized [flavodoxin] + H2O + 2 H(+) = 2-C-methyl-D-erythritol 2,4-cyclic diphosphate + reduced [flavodoxin]. It functions in the pathway isoprenoid biosynthesis; isopentenyl diphosphate biosynthesis via DXP pathway; isopentenyl diphosphate from 1-deoxy-D-xylulose 5-phosphate: step 5/6. Its function is as follows. Converts 2C-methyl-D-erythritol 2,4-cyclodiphosphate (ME-2,4cPP) into 1-hydroxy-2-methyl-2-(E)-butenyl 4-diphosphate. The protein is 4-hydroxy-3-methylbut-2-en-1-yl diphosphate synthase (flavodoxin) of Bradyrhizobium sp. (strain BTAi1 / ATCC BAA-1182).